A 1133-amino-acid polypeptide reads, in one-letter code: Nuclear pore complex-interacting protein family member B5 (1133 aa).

Residues 60 to 84 (WLHVIIAFPTSYKVVITLWIVYLWV) traverse the membrane as a helical segment. 3 disordered regions span residues 241-262 (NRMGHQPPPPTQQHSITDNSLS), 290-575 (LTPL…IKTP), and 868-1133 (ERLR…RRLS). Residues 252–262 (QQHSITDNSLS) show a composition bias toward polar residues. The segment covering 349–359 (PLPPSALPSAP) has biased composition (pro residues). Composition is skewed to basic and acidic residues over residues 406–416 (DNIKTPAERLR), 448–458 (DNIKTPAERLR), 490–500 (DNIKTPAERLR), 528–538 (DNIKTPAERLR), 903–913 (DNIKTPAERLR), 945–955 (DNIKTPAERLR), and 987–997 (DNIKTPAERLR).

It belongs to the NPIP family.

The protein resides in the membrane. The sequence is that of Nuclear pore complex-interacting protein family member B5 (NPIPB5) from Homo sapiens (Human).